Here is a 189-residue protein sequence, read N- to C-terminus: uncharacterized protein (189 aa).

The span at 105–115 (EKLEKEEESKT) shows a compositional bias: basic and acidic residues. Residues 105-189 (EKLEKEEESK…TDDEKTEVST (85 aa)) are disordered. Over residues 116 to 136 (AKKRAKRLRQKAAAKKRKLTK) the composition is skewed to basic residues. A compositionally biased stretch (acidic residues) spans 141 to 151 (SDESSSDDSDS). Residues 161-177 (SEGKQNTEVEDKDKVEK) are compositionally biased toward basic and acidic residues. The segment covering 178-189 (EETDDEKTEVST) has biased composition (acidic residues).

This is an uncharacterized protein from Caenorhabditis elegans.